We begin with the raw amino-acid sequence, 271 residues long: MKKMILIAGPCVIESKDLIFKVAEQLKNFNENPNIEFYFKSSFDKANRTSINSFRGPGLEEGLKILQSVKDEFGMKILTDIHESNQANPVSEVADVLQIPAFLCRQTDLLVAAAKTKAKINIKKGQFLNPSDIKYSVKKVLQTRGIEDEGYEAAQRNGVFVAERGASFGYGNLVVDMRSLVIMREFAPVIFDATHSVQMPGAAGGSSGGKSEFVEPLARAAAAVGIDGFFFETHINPCEALCDGPNMLNLTRLKNCVNTLLEIQNIIKENK.

This sequence belongs to the KdsA family.

The protein localises to the cytoplasm. The enzyme catalyses D-arabinose 5-phosphate + phosphoenolpyruvate + H2O = 3-deoxy-alpha-D-manno-2-octulosonate-8-phosphate + phosphate. It functions in the pathway carbohydrate biosynthesis; 3-deoxy-D-manno-octulosonate biosynthesis; 3-deoxy-D-manno-octulosonate from D-ribulose 5-phosphate: step 2/3. Its pathway is bacterial outer membrane biogenesis; lipopolysaccharide biosynthesis. The protein is 2-dehydro-3-deoxyphosphooctonate aldolase of Campylobacter jejuni subsp. jejuni serotype O:2 (strain ATCC 700819 / NCTC 11168).